Here is a 101-residue protein sequence, read N- to C-terminus: Small ribosomal subunit protein uS14 (101 aa).

This sequence belongs to the universal ribosomal protein uS14 family. In terms of assembly, part of the 30S ribosomal subunit. Contacts proteins S3 and S10.

Functionally, binds 16S rRNA, required for the assembly of 30S particles and may also be responsible for determining the conformation of the 16S rRNA at the A site. This chain is Small ribosomal subunit protein uS14, found in Synechococcus sp. (strain JA-2-3B'a(2-13)) (Cyanobacteria bacterium Yellowstone B-Prime).